Consider the following 264-residue polypeptide: Phosphatidylglycerol--prolipoprotein diacylglyceryl transferase (264 aa).

A run of 3 helical transmembrane segments spans residues 17–37 (LAIH…LWLA), 59–79 (LLFY…VLFY), and 95–115 (WKGG…MALF). Position 142 (arginine 142) interacts with a 1,2-diacyl-sn-glycero-3-phospho-(1'-sn-glycerol). A run of 2 helical transmembrane segments spans residues 205–225 (GQVS…AEYF) and 241–261 (MGQW…VWAG).

Belongs to the Lgt family.

It localises to the cell inner membrane. It carries out the reaction L-cysteinyl-[prolipoprotein] + a 1,2-diacyl-sn-glycero-3-phospho-(1'-sn-glycerol) = an S-1,2-diacyl-sn-glyceryl-L-cysteinyl-[prolipoprotein] + sn-glycerol 1-phosphate + H(+). It functions in the pathway protein modification; lipoprotein biosynthesis (diacylglyceryl transfer). Functionally, catalyzes the transfer of the diacylglyceryl group from phosphatidylglycerol to the sulfhydryl group of the N-terminal cysteine of a prolipoprotein, the first step in the formation of mature lipoproteins. The sequence is that of Phosphatidylglycerol--prolipoprotein diacylglyceryl transferase from Methylibium petroleiphilum (strain ATCC BAA-1232 / LMG 22953 / PM1).